A 743-amino-acid polypeptide reads, in one-letter code: Amylovoran biosynthesis protein AmsF (743 aa).

The first 27 residues, 1-27, serve as a signal peptide directing secretion; the sequence is MKRRELIRTAFSTIVATAALSSVSARA.

It to R.meliloti ExoP.

It is found in the periplasm. The protein operates within glycan metabolism; exopolysaccharide biosynthesis. In terms of biological role, involved in the biosynthesis of amylovoran which functions as a virulence factor. May be involved in the polymerization or late modification of the repeating units. The chain is Amylovoran biosynthesis protein AmsF (amsF) from Erwinia amylovora (Fire blight bacteria).